Reading from the N-terminus, the 694-residue chain is Frizzled-8 (694 aa).

The signal sequence occupies residues 1–27 (MEWGYLLEVTSLLAALALLQRSSGAAA). At 28–275 (ASAKELACQE…NPFFSQDERA (248 aa)) the chain is on the extracellular side. The FZ domain maps to 30-151 (AKELACQEIT…GNPDTLCMDY (122 aa)). Intrachain disulfides connect Cys-35-Cys-96, Cys-43-Cys-89, Cys-80-Cys-118, Cys-107-Cys-148, and Cys-111-Cys-135. Asn-49 is a glycosylation site (N-linked (GlcNAc...) asparagine). 71-78 (QFWPLVEI) serves as a coordination point for hexadecanoate. The interval 95–100 (ICLEDY) is wnt-binding. Residues 147–152 (LCMDYN) are wnt-binding. An N-linked (GlcNAc...) asparagine glycan is attached at Asn-152. Residues 155–226 (DLTTAAPSPP…KARPPGGGAA (72 aa)) are disordered. A compositionally biased stretch (pro residues) spans 161–175 (PSPPRRLPPPPPGEQ). Over residues 176–186 (PPSGSGHGRPP) the composition is skewed to low complexity. Gly residues predominate over residues 210–225 (RGGGGGGKARPPGGGA). Residues 276–296 (FTVFWIGLWSVLCFVSTFATV) traverse the membrane as a helical segment. The Cytoplasmic portion of the chain corresponds to 297–312 (STFLIDMERFKYPERP). A helical membrane pass occupies residues 313 to 333 (IIFLSACYLFVSVGYLVRLVA). The Extracellular segment spans residues 334–396 (GHEKVACSGG…RYETTGPALC (63 aa)). The chain crosses the membrane as a helical span at residues 397–417 (TVVFLLVYFFGMASSIWWVIL). Over 418–439 (SLTWFLAAGMKWGNEAIAGYSQ) the chain is Cytoplasmic. Residues 440 to 460 (YFHLAAWLVPSVKSIAVLALS) traverse the membrane as a helical segment. Topologically, residues 461–483 (SVDGDPVAGICYVGNQSLDNLRG) are extracellular. Residue Asn-475 is glycosylated (N-linked (GlcNAc...) asparagine). Residues 484–504 (FVLAPLVIYLFIGTMFLLAGF) traverse the membrane as a helical segment. Topologically, residues 505-532 (VSLFRIRSVIKQQDGPTKTHKLEKLMIR) are cytoplasmic. The chain crosses the membrane as a helical span at residues 533–553 (LGLFTVLYTVPAAVVVACLFY). Over 554-584 (EQHNRPRWEATHNCPCLRDLQPDQARRPDYA) the chain is Extracellular. Residues 585–605 (VFMLKYFMCLVVGITSGVWVW) traverse the membrane as a helical segment. Topologically, residues 606 to 694 (SGKTLESWRS…YPKQMPLSQV (89 aa)) are cytoplasmic. The short motif at 608–613 (KTLESW) is the Lys-Thr-X-X-X-Trp motif, mediates interaction with the PDZ domain of Dvl family members element. The segment covering 648–664 (GGGGPGGGGGPGGGGGS) has biased composition (gly residues). Positions 648–668 (GGGGPGGGGGPGGGGGSLYSD) are disordered. A PDZ-binding motif is present at residues 692–694 (SQV).

This sequence belongs to the G-protein coupled receptor Fz/Smo family. In terms of assembly, component of a Wnt-signaling complex that contains a WNT protein, a FZD protein and LRP5 or LRP6. Interacts directly with LRP5 or LRP6; the interaction is promoted by Wnt-binding and signaling and inhibited by DKK1. Interacts with GPOC, RSPO1 and RSPO3. Interacts with glypican GPC3. Ubiquitinated by ZNRF3, leading to its degradation by the proteasome. In terms of tissue distribution, most abundant in fetal kidney, followed by brain and lung. In adult tissues, expressed in kidney, heart, pancreas and skeletal muscle.

The protein resides in the membrane. It localises to the golgi apparatus. It is found in the cell membrane. In terms of biological role, receptor for Wnt proteins. Component of the Wnt-Fzd-LRP5-LRP6 complex that triggers beta-catenin signaling through inducing aggregation of receptor-ligand complexes into ribosome-sized signalosomes. The beta-catenin canonical signaling pathway leads to the activation of disheveled proteins, inhibition of GSK-3 kinase, nuclear accumulation of beta-catenin and activation of Wnt target genes. A second signaling pathway involving PKC and calcium fluxes has been seen for some family members, but it is not yet clear if it represents a distinct pathway or if it can be integrated in the canonical pathway, as PKC seems to be required for Wnt-mediated inactivation of GSK-3 kinase. Both pathways seem to involve interactions with G-proteins. May be involved in transduction and intercellular transmission of polarity information during tissue morphogenesis and/or in differentiated tissues. Coreceptor along with RYK of Wnt proteins, such as WNT1. The protein is Frizzled-8 (FZD8) of Homo sapiens (Human).